The primary structure comprises 206 residues: Small ribosomal subunit protein uS4A (206 aa).

The S4 RNA-binding domain maps to 98–163 (MRLDNVVYRL…SERFKMFAEN (66 aa)).

It belongs to the universal ribosomal protein uS4 family. As to quaternary structure, part of the 30S ribosomal subunit. Contacts protein S5. The interaction surface between S4 and S5 is involved in control of translational fidelity.

Its function is as follows. One of the primary rRNA binding proteins, it binds directly to 16S rRNA where it nucleates assembly of the body of the 30S subunit. Functionally, with S5 and S12 plays an important role in translational accuracy. This chain is Small ribosomal subunit protein uS4A, found in Clostridium perfringens (strain ATCC 13124 / DSM 756 / JCM 1290 / NCIMB 6125 / NCTC 8237 / Type A).